The following is a 166-amino-acid chain: Regulatory protein RecX (166 aa).

Belongs to the RecX family.

Its subcellular location is the cytoplasm. Its function is as follows. Modulates RecA activity. This is Regulatory protein RecX from Shigella sonnei (strain Ss046).